The following is an 820-amino-acid chain: DNA mismatch repair protein MutS (820 aa).

ATP is bound at residue 618–625 (GPNMAGKS).

Belongs to the DNA mismatch repair MutS family.

Functionally, this protein is involved in the repair of mismatches in DNA. It is possible that it carries out the mismatch recognition step. This protein has a weak ATPase activity. The chain is DNA mismatch repair protein MutS from Chlamydia trachomatis serovar L2b (strain UCH-1/proctitis).